Reading from the N-terminus, the 271-residue chain is Small ribosomal subunit protein uS2 (271 aa).

The interval 223 to 271 (RALAGSEEGEATEEVTPASEAEKQEVLAEAMSEEGDALQESEVVEEEEK) is disordered. A compositionally biased stretch (acidic residues) spans 253 to 271 (MSEEGDALQESEVVEEEEK).

This sequence belongs to the universal ribosomal protein uS2 family.

This Wolinella succinogenes (strain ATCC 29543 / DSM 1740 / CCUG 13145 / JCM 31913 / LMG 7466 / NCTC 11488 / FDC 602W) (Vibrio succinogenes) protein is Small ribosomal subunit protein uS2.